The sequence spans 491 residues: Cobyric acid synthase (491 aa).

The GATase cobBQ-type domain maps to 246 to 432 (RKLIACPILP…VHGLLADAEL (187 aa)). Catalysis depends on Cys-328, which acts as the Nucleophile. His-424 is an active-site residue.

It belongs to the CobB/CobQ family. CobQ subfamily.

It functions in the pathway cofactor biosynthesis; adenosylcobalamin biosynthesis. In terms of biological role, catalyzes amidations at positions B, D, E, and G on adenosylcobyrinic A,C-diamide. NH(2) groups are provided by glutamine, and one molecule of ATP is hydrogenolyzed for each amidation. The protein is Cobyric acid synthase of Novosphingobium aromaticivorans (strain ATCC 700278 / DSM 12444 / CCUG 56034 / CIP 105152 / NBRC 16084 / F199).